A 114-amino-acid polypeptide reads, in one-letter code: Large ribosomal subunit protein eL31 (114 aa).

This sequence belongs to the eukaryotic ribosomal protein eL31 family.

This Eremothecium gossypii (strain ATCC 10895 / CBS 109.51 / FGSC 9923 / NRRL Y-1056) (Yeast) protein is Large ribosomal subunit protein eL31 (RPL31).